The sequence spans 230 residues: Large ribosomal subunit protein uL1 (230 aa).

The protein belongs to the universal ribosomal protein uL1 family. Part of the 50S ribosomal subunit.

Its function is as follows. Binds directly to 23S rRNA. The L1 stalk is quite mobile in the ribosome, and is involved in E site tRNA release. Functionally, protein L1 is also a translational repressor protein, it controls the translation of the L11 operon by binding to its mRNA. The sequence is that of Large ribosomal subunit protein uL1 from Caldicellulosiruptor bescii (strain ATCC BAA-1888 / DSM 6725 / KCTC 15123 / Z-1320) (Anaerocellum thermophilum).